The primary structure comprises 455 residues: Probable glucarate dehydratase (455 aa).

Positions 42, 113, 160, and 215 each coordinate substrate. Residue Lys217 is the Proton acceptor of the active site. Mg(2+) is bound by residues Asp245, Glu276, and Asn299. 245–247 (DPN) is a substrate binding site. Substrate is bound by residues Asn299, 349–351 (HSN), His378, and Arg431. The active-site Proton acceptor is the His349.

This sequence belongs to the mandelate racemase/muconate lactonizing enzyme family. GlucD subfamily. The cofactor is Mg(2+).

The enzyme catalyses D-glucarate = 5-dehydro-4-deoxy-D-glucarate + H2O. It functions in the pathway carbohydrate acid metabolism; D-glucarate degradation; 2,5-dioxopentanoate from D-glucarate: step 1/2. Catalyzes the dehydration of glucarate to 5-keto-4-deoxy-D-glucarate (5-kdGluc). In Bacillus subtilis (strain 168), this protein is Probable glucarate dehydratase (gudD).